The primary structure comprises 409 residues: MTLKDYDLELFNAIQREDNRQKEHIELIASENFVSDAVLEAQGSILTNKYAEGYPNKRYYGGCEFVDQVEILAQDRLKQIFNAKFVNVQPHSGSQANAAVYQALLSPGDRVLGMDLNAGGHLTHGYKLSFSGHYYEAHAYGVSRFDERIDYEEVLKIAIEVKPKMIIAGASAYPRVIDFKKFREIADTVGAYLFVDMAHIAGLVACGLHPSPLPYADVVTSTTHKTLRGPRGGIILTNDASIAKKIDRAVFPGQQGGPLMHIIAAKAVAFKEALDPNFKVYQTQVIKNAKALSDTFKSLGYKLISDGTDNHLILVDVKSKLGITGRDAEDALYKANITINKNQLPFDQEKPMLTSGIRLGTPAMTTKGFKENEFIKVAQLIDEVLSNINNEEVINKVKKEVLKLMKDVK.

Residues Leu-116 and 120–122 (GHL) contribute to the (6S)-5,6,7,8-tetrahydrofolate site. Lys-225 carries the post-translational modification N6-(pyridoxal phosphate)lysine.

This sequence belongs to the SHMT family. In terms of assembly, homodimer. Requires pyridoxal 5'-phosphate as cofactor.

It localises to the cytoplasm. The enzyme catalyses (6R)-5,10-methylene-5,6,7,8-tetrahydrofolate + glycine + H2O = (6S)-5,6,7,8-tetrahydrofolate + L-serine. It participates in one-carbon metabolism; tetrahydrofolate interconversion. It functions in the pathway amino-acid biosynthesis; glycine biosynthesis; glycine from L-serine: step 1/1. In terms of biological role, catalyzes the reversible interconversion of serine and glycine with tetrahydrofolate (THF) serving as the one-carbon carrier. This reaction serves as the major source of one-carbon groups required for the biosynthesis of purines, thymidylate, methionine, and other important biomolecules. Also exhibits THF-independent aldolase activity toward beta-hydroxyamino acids, producing glycine and aldehydes, via a retro-aldol mechanism. The protein is Serine hydroxymethyltransferase of Acholeplasma laidlawii (strain PG-8A).